Reading from the N-terminus, the 352-residue chain is GTPase Obg (352 aa).

Positions 1–159 (MQFIDQAEIQ…RMLRLELKLL (159 aa)) constitute an Obg domain. The region spanning 160–330 (AEVGIIGLPN…LMQEIWGLLE (171 aa)) is the OBG-type G domain. GTP contacts are provided by residues 166–173 (GLPNAGKS), 191–195 (FTTLV), 213–216 (DIPG), 280–283 (NKVD), and 311–313 (SAV). Mg(2+)-binding residues include S173 and T193.

The protein belongs to the TRAFAC class OBG-HflX-like GTPase superfamily. OBG GTPase family. Monomer. The cofactor is Mg(2+).

Its subcellular location is the cytoplasm. An essential GTPase which binds GTP, GDP and possibly (p)ppGpp with moderate affinity, with high nucleotide exchange rates and a fairly low GTP hydrolysis rate. Plays a role in control of the cell cycle, stress response, ribosome biogenesis and in those bacteria that undergo differentiation, in morphogenesis control. This Trichodesmium erythraeum (strain IMS101) protein is GTPase Obg.